We begin with the raw amino-acid sequence, 827 residues long: MALDIDYVLSHISQEDKIALLAGIDFWHTHPIPELNVPSIRSTDGPNGIRGTKFFAGVPAACLPCGTALASTWDQNLLREVGVLIGKECLAKGAHCWLGPTINMPRSPLGGRGFESFAEDPHLAGAMAASMITGCESTGVISAVKHFVGNDQEHERRAVDVLVTQRALREIYLRPFQIVARDAGPGALMTSYNKINGKHVVESKEMLDMVRQEWKWNPLIMSDWLGTYTTIDSMNAGLDLEMPGPSRYRGRYVESALQARLIKESTIDSRARKVLEFVQQASRAPVSAVETGRDYPEDRALNRNLCANSIVLLKNQNDILPLPKTIKKIALVGSHVRTPAISGGGSASLEPYYTVSLYDAVSEALPHTEILYEVGAYAHKMLPVIDRLLTNAVMHFYNEPVGTERILRATQRMSKTAFQLMDFNAPELNRGLFYATLTGDFTPDVSGVWDFGLTVFGTGLLYVDDELVVDNTTHQTRGTAFFGKGTVQELGSKTLNAEQTYKIRIEYGSANTSPMKAIGVVHFGGGAAHLGACLHVDSAEMVRSAVKAAAEADYTILCTGLNHEWESEGFDRSHMDLPPGIDALITSVLDVAANKTVIVNQSGTPVTMPWADRARGIVQAWYGGNETGHGIADVIFGDVNPSGKLPLSWPVDVKHNPAYLNYASVGGRVLYGEDVYVGYRYYEKVGREVLFPFGHGLSYTTFTVSPDVVFSQEVFRPEEPPTAAVKIKNTGKVAGAQVLQLYISAPHSPTPRPTKELHGFTKVLLQPGEERVAHIRMDKYATNFWDEIEGMWKSEEGIYEALIGTSSQNILAKGTFRVDRTRYWLGL.

Asp-223 is an active-site residue. In terms of domain architecture, PA14 spans 387–546 (RLLTNAVMHF…DSAEMVRSAV (160 aa)). Asn-471, Asn-594, Asn-600, and Asn-625 each carry an N-linked (GlcNAc...) asparagine glycan.

It belongs to the glycosyl hydrolase 3 family.

The protein resides in the secreted. It carries out the reaction Hydrolysis of terminal, non-reducing beta-D-glucosyl residues with release of beta-D-glucose.. Its pathway is glycan metabolism; cellulose degradation. Its function is as follows. Beta-glucosidases are one of a number of cellulolytic enzymes involved in the degradation of cellulosic biomass. Catalyzes the last step releasing glucose from the inhibitory cellobiose. In Aspergillus flavus (strain ATCC 200026 / FGSC A1120 / IAM 13836 / NRRL 3357 / JCM 12722 / SRRC 167), this protein is Probable beta-glucosidase H (bglH).